Reading from the N-terminus, the 402-residue chain is Fugralins biosynthesis cluster protein 2 (402 aa).

5 helical membrane passes run 28–48, 109–129, 145–165, 232–252, and 264–284; these read NCLA…CFLL, ILIF…AILV, IFWW…TAIV, VIFG…AVTV, and LAPL…IVCV. 2 disordered regions span residues 312–335 and 378–402; these read NPNT…TGPK and TQDN…PWGV. Residues 324 to 334 are compositionally biased toward polar residues; the sequence is TKGSQLSSTGP. A glycan (N-linked (GlcNAc...) asparagine) is linked at asparagine 381.

The protein belongs to the SAT4 family.

It is found in the membrane. Its pathway is secondary metabolite biosynthesis. Part of the gene cluster that mediates the biosynthesis of the tetraketides fugralins such as linear fugralin A and cyclic fugralin B, volatile compounds that play a role in the asexual reproductive cycle but are not involved in pathogenicity. One of the key features of fugralins is the presence of a double methyl group, which is only rarely encountered in fungal secondary metabolites. As the fugralins cluster does not contain an independent methyltransferase, the PKS FGR1 is probably responsible for adding two methyl groups to the same carbon atom. Fugralin B is similar to fugralin A except for a cyclization between the carboxylic acid C-8 and the alcohol on C-4 resulting in a six membered lactone ring, probably catalyzed by the cyclase FGR4. The exact role of the individual cluster genes remains unknown and further work is needed to unravel the biosynthetic pathway. In Gibberella zeae (strain ATCC MYA-4620 / CBS 123657 / FGSC 9075 / NRRL 31084 / PH-1) (Wheat head blight fungus), this protein is Fugralins biosynthesis cluster protein 2.